The chain runs to 715 residues: DNA ligase (715 aa).

Residues 47–51, 96–97, and glutamate 129 contribute to the NAD(+) site; these read DADYD and SL. The N6-AMP-lysine intermediate role is filled by lysine 131. Residues arginine 152, glutamate 189, lysine 306, and lysine 330 each coordinate NAD(+). Zn(2+) contacts are provided by cysteine 435, cysteine 438, cysteine 453, and cysteine 459. Positions 637–715 constitute a BRCT domain; sequence KRDSAVAGKT…EDEWLALIQG (79 aa).

This sequence belongs to the NAD-dependent DNA ligase family. LigA subfamily. Requires Mg(2+) as cofactor. Mn(2+) is required as a cofactor.

It carries out the reaction NAD(+) + (deoxyribonucleotide)n-3'-hydroxyl + 5'-phospho-(deoxyribonucleotide)m = (deoxyribonucleotide)n+m + AMP + beta-nicotinamide D-nucleotide.. Its function is as follows. DNA ligase that catalyzes the formation of phosphodiester linkages between 5'-phosphoryl and 3'-hydroxyl groups in double-stranded DNA using NAD as a coenzyme and as the energy source for the reaction. It is essential for DNA replication and repair of damaged DNA. The protein is DNA ligase of Rhodopseudomonas palustris (strain BisA53).